We begin with the raw amino-acid sequence, 248 residues long: MAYERQYYPGATSVAANRRKHMSGKLEKLREISDEDLTAVLGHRAPGSDYPSTHPPLAEMGEPACSTRENVAATPGAAAGDRVRYIQFADSMYNAPATPYFRSYFAAINFRGVDPGTLSGRQIVEARERDMEQCAKVQMETEITDHALAGVRGATVHGHSVRLQEDGVMFDMLDRRRLENGTIIMDKDQVAIPLDRKVDLGKPMSSEEAAKRTTIYRVDNVAFRDDAEVVEWVHRIFDQRTKFGFQPK.

Arg-121 is a binding site for coenzyme M.

This sequence belongs to the methyl-coenzyme M reductase gamma subunit family. In terms of assembly, MCR is a hexamer of two alpha, two beta, and two gamma chains, forming a dimer of heterotrimers. The cofactor is coenzyme F430.

It localises to the cytoplasm. The enzyme catalyses coenzyme B + methyl-coenzyme M = methane + coenzyme M-coenzyme B heterodisulfide. The protein operates within one-carbon metabolism; methyl-coenzyme M reduction; methane from methyl-coenzyme M: step 1/1. Component of the methyl-coenzyme M reductase (MCR) I that catalyzes the reductive cleavage of methyl-coenzyme M (CoM-S-CH3 or 2-(methylthio)ethanesulfonate) using coenzyme B (CoB or 7-mercaptoheptanoylthreonine phosphate) as reductant which results in the production of methane and the mixed heterodisulfide of CoB and CoM (CoM-S-S-CoB). This is the final step in methanogenesis. The protein is Methyl-coenzyme M reductase subunit gamma (mcrG) of Methanosarcina barkeri (strain Fusaro / DSM 804).